A 325-amino-acid polypeptide reads, in one-letter code: Tagatose 1,6-diphosphate aldolase 1 (325 aa).

It belongs to the aldolase LacD family.

The catalysed reaction is D-tagatofuranose 1,6-bisphosphate = D-glyceraldehyde 3-phosphate + dihydroxyacetone phosphate. Its pathway is carbohydrate metabolism; D-tagatose 6-phosphate degradation; D-glyceraldehyde 3-phosphate and glycerone phosphate from D-tagatose 6-phosphate: step 2/2. The chain is Tagatose 1,6-diphosphate aldolase 1 from Streptococcus agalactiae serotype III (strain NEM316).